Consider the following 309-residue polypeptide: Tagatose-6-phosphate kinase (309 aa).

This sequence belongs to the carbohydrate kinase PfkB family. LacC subfamily.

The enzyme catalyses D-tagatofuranose 6-phosphate + ATP = D-tagatofuranose 1,6-bisphosphate + ADP + H(+). The protein operates within carbohydrate metabolism; D-tagatose 6-phosphate degradation; D-glyceraldehyde 3-phosphate and glycerone phosphate from D-tagatose 6-phosphate: step 1/2. This is Tagatose-6-phosphate kinase from Streptococcus pneumoniae serotype 4 (strain ATCC BAA-334 / TIGR4).